Reading from the N-terminus, the 149-residue chain is UPF0179 protein MA_3685 (149 aa).

Belongs to the UPF0179 family.

This chain is UPF0179 protein MA_3685, found in Methanosarcina acetivorans (strain ATCC 35395 / DSM 2834 / JCM 12185 / C2A).